The following is a 423-amino-acid chain: Putative competence-damage inducible protein (423 aa).

The protein belongs to the CinA family.

This is Putative competence-damage inducible protein from Streptococcus pyogenes serotype M3 (strain ATCC BAA-595 / MGAS315).